Reading from the N-terminus, the 906-residue chain is Ribonucleoside-diphosphate reductase large subunit-like protein (906 aa).

Disordered regions lie at residues 1 to 70 (MNPA…AGNT) and 89 to 129 (VSWR…LSTF). Residues 98–109 (PDGTPSVLSLTR) are compositionally biased toward polar residues.

It belongs to the ribonucleoside diphosphate reductase large chain family.

The protein localises to the virion. It localises to the host cytoplasm. Functionally, does not possess a ribonucleotide reductase activity. Betaherpesviruses probably use another strategy to expand the dNTP pool in a quiescent host cell. This chain is Ribonucleoside-diphosphate reductase large subunit-like protein, found in Homo sapiens (Human).